A 313-amino-acid chain; its full sequence is D-alanine--D-alanine ligase (313 aa).

The region spanning 108-308 (KLVWQQTGVP…YSELVVKVLA (201 aa)) is the ATP-grasp domain. 138–193 (VAKLGLPLFVKPASEGSSVAVLKVKTADALPAALSEAATHDKIVIVEKSIEGGGEY) contacts ATP. 3 residues coordinate Mg(2+): D262, E275, and N277.

This sequence belongs to the D-alanine--D-alanine ligase family. Mg(2+) serves as cofactor. The cofactor is Mn(2+).

It localises to the cytoplasm. It catalyses the reaction 2 D-alanine + ATP = D-alanyl-D-alanine + ADP + phosphate + H(+). It functions in the pathway cell wall biogenesis; peptidoglycan biosynthesis. Cell wall formation. This chain is D-alanine--D-alanine ligase, found in Burkholderia ambifaria (strain ATCC BAA-244 / DSM 16087 / CCUG 44356 / LMG 19182 / AMMD) (Burkholderia cepacia (strain AMMD)).